The primary structure comprises 1008 residues: Collagen, type I, alpha 1a (1008 aa).

Residues 1 to 21 are compositionally biased toward pro residues; it reads SPAMPVPGPMGPMGPRGPPGS. The segment at 1-920 is disordered; that stretch reads SPAMPVPGPM…PQEKAPDPFR (920 aa). Basic and acidic residues predominate over residues 39–53; that stretch reads NGEDGESGKPGRGGE. Residues 92 to 117 are compositionally biased toward low complexity; that stretch reads TPGAMGPRGAAGAAGARGNDGAAGAA. Pro residues predominate over residues 119-132; sequence PPGPTGPAGPPGFP. Over residues 133–151 the composition is skewed to gly residues; that stretch reads GGPGAKGDAGAQGGRGPEG. Composition is skewed to low complexity over residues 152 to 195 and 204 to 230; these read PAGA…AGAP and SGPQGAAGAPGPKGEAGAKGEAGAPGV. Over residues 253-265 the composition is skewed to gly residues; sequence GARGGPGGRGFPG. 2 stretches are compositionally biased toward low complexity: residues 339 to 354 and 410 to 422; these read VGARGQPGVMGFPGPK and LPGEAGATGPAGA. The segment covering 423–435 has biased composition (basic and acidic residues); that stretch reads RGDRGFPGERGAK. Composition is skewed to low complexity over residues 437 to 456, 489 to 524, and 537 to 573; these read DAGAPGAPGAQGPPGLQGMP, RGLTGPLGLPGPAGATGDKGESGPAGAVGPAGARGA, and AGFAGPPGADGQPGAKGEAGDNGAKGDAGPPGAAGPT. The span at 604 to 617 shows a compositional bias: pro residues; that stretch reads PPGPSGNPGPPGPA. Residues 634 to 661 are compositionally biased toward low complexity; it reads PAGRPGELGAAGPPGPAGEKGSPGSEGA. Gly residues predominate over residues 696–709; the sequence is GEAGGPSGPGGERG. Low complexity predominate over residues 717–735; the sequence is PGLAGAPGEPGREGSPGNE. Residues 761-771 show a composition bias toward pro residues; sequence APGPPGAPGPV. A compositionally biased stretch (low complexity) spans 785 to 806; that stretch reads PAGPAGSAGPSGPRGPAGAPGL. A compositionally biased stretch (basic and acidic residues) spans 807 to 821; the sequence is RGDKGESGEAGERRG. Positions 832-868 are enriched in low complexity; the sequence is SGSSGEQGPAGAAGPAGPRGPAGSAGSPGKDGMSGLP. Over residues 884–896 the composition is skewed to pro residues; sequence AGPPGPPGPPGAP. A Fibrillar collagen NC1 domain is found at 978 to 1008; the sequence is TSRLPLLDLAPMDVGAPDQEFGLEVGPVCFL.

The protein belongs to the fibrillar collagen family.

It is found in the secreted. It localises to the extracellular space. The protein localises to the extracellular matrix. This Epinephelus aeneus (White grouper) protein is Collagen, type I, alpha 1a.